The sequence spans 79 residues: Small ribosomal subunit protein uS17 (79 aa).

Belongs to the universal ribosomal protein uS17 family. Part of the 30S ribosomal subunit.

Its function is as follows. One of the primary rRNA binding proteins, it binds specifically to the 5'-end of 16S ribosomal RNA. The protein is Small ribosomal subunit protein uS17 of Rhizobium rhizogenes (strain K84 / ATCC BAA-868) (Agrobacterium radiobacter).